A 366-amino-acid chain; its full sequence is Holliday junction branch migration complex subunit RuvB (366 aa).

Positions 1–48 (MIDRLMAREAIYQQSNPDPGGDPPEDGPPHGKNAADGGDEPDRGPDPD) are disordered. The interval 21–212 (GDPPEDGPPH…FQIREHLGWY (192 aa)) is large ATPase domain (RuvB-L). Residues Leu51, Arg52, Gly93, Lys96, Thr97, Thr98, 159–161 (EDF), Arg202, Tyr212, and Arg249 contribute to the ATP site. A Mg(2+)-binding site is contributed by Thr97. The segment at 213-283 (TRKELAEIVL…VCEAALDMIG (71 aa)) is small ATPAse domain (RuvB-S). Residues 286–366 (HLGLDKQDRN…KRQMPDRPLS (81 aa)) are head domain (RuvB-H). The DNA site is built by Arg341, Arg343, and Arg346.

The protein belongs to the RuvB family. Homohexamer. Forms an RuvA(8)-RuvB(12)-Holliday junction (HJ) complex. HJ DNA is sandwiched between 2 RuvA tetramers; dsDNA enters through RuvA and exits via RuvB. An RuvB hexamer assembles on each DNA strand where it exits the tetramer. Each RuvB hexamer is contacted by two RuvA subunits (via domain III) on 2 adjacent RuvB subunits; this complex drives branch migration. In the full resolvosome a probable DNA-RuvA(4)-RuvB(12)-RuvC(2) complex forms which resolves the HJ.

The protein localises to the cytoplasm. The catalysed reaction is ATP + H2O = ADP + phosphate + H(+). Its function is as follows. The RuvA-RuvB-RuvC complex processes Holliday junction (HJ) DNA during genetic recombination and DNA repair, while the RuvA-RuvB complex plays an important role in the rescue of blocked DNA replication forks via replication fork reversal (RFR). RuvA specifically binds to HJ cruciform DNA, conferring on it an open structure. The RuvB hexamer acts as an ATP-dependent pump, pulling dsDNA into and through the RuvAB complex. RuvB forms 2 homohexamers on either side of HJ DNA bound by 1 or 2 RuvA tetramers; 4 subunits per hexamer contact DNA at a time. Coordinated motions by a converter formed by DNA-disengaged RuvB subunits stimulates ATP hydrolysis and nucleotide exchange. Immobilization of the converter enables RuvB to convert the ATP-contained energy into a lever motion, pulling 2 nucleotides of DNA out of the RuvA tetramer per ATP hydrolyzed, thus driving DNA branch migration. The RuvB motors rotate together with the DNA substrate, which together with the progressing nucleotide cycle form the mechanistic basis for DNA recombination by continuous HJ branch migration. Branch migration allows RuvC to scan DNA until it finds its consensus sequence, where it cleaves and resolves cruciform DNA. The sequence is that of Holliday junction branch migration complex subunit RuvB from Rhodopirellula baltica (strain DSM 10527 / NCIMB 13988 / SH1).